The following is a 691-amino-acid chain: MPFGIDNTDFTVLAGLVLAVLLYVKRNSIKELLMSDDGDITAVSSGNRDIAQVVTENNKNYLVLYASQTGTAEDYAKKFSKELVAKFNLNVMCADVENYDFESLNDVPVIVSIFISTYGEGDFPDGAVNFEDFICNAEAGALSNLRYNMFGLGNSTYEFFNGAAKKAEKHLSAAGAIRLGKLGEADDGAGTTDEDYMAWKDSILEVLKDELHLDEQEAKFTSQFQYTVLNEITDSMSLGEPSAHYLPSHQLNRNADGIQLGPFDLSQPYIAPIVKSRELFSSNDRNCIHSEFDLSGSNIKYSTGDHLAVWPSNPLEKVEQFLSIFNLDPETIFDLKPLDPTVKVPFPTPTTIGAAIKHYLEITGPVSRQLFSSLIQFAPNADVKEKLTLLSKDKDQFAVEITSKYFNIADALKYLSDGAKWDTVPMQFLVESVPQMTPRYYSISSSSLSEKQTVHVTSIVENFPNPELPDAPPVVGVTTNLLRNIQLAQNNVNIAETNLPVHYDLNGPRKLFANYKLPVHVRRSNFRLPSNPSTPVIMIGPGTGVAPFRGFIRERVAFLESQKKGGNNVSLGKHILFYGSRNTDDFLYQDEWPEYAKKLDGSFEMVVAHSRLPNTKKVYVQDKLKDYEDQVFEMINNGAFIYVCGDAKGMAKGVSTALVGILSRGKSITTDEATELIKMLKTSGRYQEDVW.

Residues 2 to 7 (PFGIDN) lie on the Lumenal side of the membrane. Residues 8–24 (TDFTVLAGLVLAVLLYV) form a helical membrane-spanning segment. At 25 to 691 (KRNSIKELLM…TSGRYQEDVW (667 aa)) the chain is on the cytoplasmic side. The region spanning 61–204 (YLVLYASQTG…DYMAWKDSIL (144 aa)) is the Flavodoxin-like domain. FMN contacts are provided by residues 67-72 (SQTGTA), K78, 116-119 (STYG), 152-161 (LGNSTYEFFN), and D187. One can recognise an FAD-binding FR-type domain in the interval 266–529 (SQPYIAPIVK…HVRRSNFRLP (264 aa)). R285 contacts NADP(+). Residues 439–442 (RYYS), 457–459 (TSI), and 476–479 (GVTT) each bind FAD. Residues T543, 610–611 (SR), 617–621 (KVYVQ), and D646 each bind NADP(+). Residue K666 forms a Glycyl lysine isopeptide (Lys-Gly) (interchain with G-Cter in ubiquitin) linkage. Residue W691 coordinates FAD.

Belongs to the NADPH--cytochrome P450 reductase family. The protein in the N-terminal section; belongs to the flavodoxin family. This sequence in the C-terminal section; belongs to the flavoprotein pyridine nucleotide cytochrome reductase family. In terms of assembly, interacts with PCL1. It depends on FAD as a cofactor. Requires FMN as cofactor. In terms of processing, phosphorylated by the cyclin-CDK PCL1-PHO85.

The protein localises to the endoplasmic reticulum membrane. The protein resides in the mitochondrion outer membrane. Its subcellular location is the cell membrane. It catalyses the reaction 2 oxidized [cytochrome P450] + NADPH = 2 reduced [cytochrome P450] + NADP(+) + H(+). Functionally, this enzyme is required for electron transfer from NADP to cytochrome P450 in microsomes. It can also provide electron transfer to heme oxygenase and cytochrome B5. Involved in ergosterol biosynthesis. Has NADPH-dependent ferrireductase activity on the plasma membrane. The sequence is that of NADPH--cytochrome P450 reductase from Saccharomyces cerevisiae (strain ATCC 204508 / S288c) (Baker's yeast).